The primary structure comprises 427 residues: Serine--tRNA ligase (427 aa).

235-237 (TAE) is an L-serine binding site. Residues 266–268 (RRE) and Val-282 each bind ATP. Glu-289 is an L-serine binding site. 353–356 (EASS) serves as a coordination point for ATP. Residue Ser-389 coordinates L-serine.

This sequence belongs to the class-II aminoacyl-tRNA synthetase family. Type-1 seryl-tRNA synthetase subfamily. In terms of assembly, homodimer. The tRNA molecule binds across the dimer.

Its subcellular location is the cytoplasm. The catalysed reaction is tRNA(Ser) + L-serine + ATP = L-seryl-tRNA(Ser) + AMP + diphosphate + H(+). The enzyme catalyses tRNA(Sec) + L-serine + ATP = L-seryl-tRNA(Sec) + AMP + diphosphate + H(+). Its pathway is aminoacyl-tRNA biosynthesis; selenocysteinyl-tRNA(Sec) biosynthesis; L-seryl-tRNA(Sec) from L-serine and tRNA(Sec): step 1/1. Functionally, catalyzes the attachment of serine to tRNA(Ser). Is also able to aminoacylate tRNA(Sec) with serine, to form the misacylated tRNA L-seryl-tRNA(Sec), which will be further converted into selenocysteinyl-tRNA(Sec). The protein is Serine--tRNA ligase of Chlorobium phaeobacteroides (strain BS1).